The chain runs to 460 residues: Bifunctional protein GlmU (460 aa).

The pyrophosphorylase stretch occupies residues 1-237 (MSSNQYTAGA…DPDLLGVNTP (237 aa)). UDP-N-acetyl-alpha-D-glucosamine is bound by residues 13–16 (LAAG), Lys27, Gln78, and 83–84 (GT). Asp109 contributes to the Mg(2+) binding site. UDP-N-acetyl-alpha-D-glucosamine contacts are provided by Gly146, Glu160, Asn177, and Asn235. Asn235 is a binding site for Mg(2+). The linker stretch occupies residues 238–258 (AELMRSEELLRENIVTRHLHN). Residues 259–460 (GVHVHAAGSV…QKNLRKTRHS (202 aa)) are N-acetyltransferase. UDP-N-acetyl-alpha-D-glucosamine contacts are provided by Arg341 and Lys359. His371 functions as the Proton acceptor in the catalytic mechanism. UDP-N-acetyl-alpha-D-glucosamine-binding residues include Tyr374 and Asn385. Acetyl-CoA contacts are provided by residues Ala388, 394–395 (NY), Ser413, Ala431, and Arg448.

The protein in the N-terminal section; belongs to the N-acetylglucosamine-1-phosphate uridyltransferase family. This sequence in the C-terminal section; belongs to the transferase hexapeptide repeat family. In terms of assembly, homotrimer. The cofactor is Mg(2+).

Its subcellular location is the cytoplasm. The catalysed reaction is alpha-D-glucosamine 1-phosphate + acetyl-CoA = N-acetyl-alpha-D-glucosamine 1-phosphate + CoA + H(+). It catalyses the reaction N-acetyl-alpha-D-glucosamine 1-phosphate + UTP + H(+) = UDP-N-acetyl-alpha-D-glucosamine + diphosphate. It participates in nucleotide-sugar biosynthesis; UDP-N-acetyl-alpha-D-glucosamine biosynthesis; N-acetyl-alpha-D-glucosamine 1-phosphate from alpha-D-glucosamine 6-phosphate (route II): step 2/2. The protein operates within nucleotide-sugar biosynthesis; UDP-N-acetyl-alpha-D-glucosamine biosynthesis; UDP-N-acetyl-alpha-D-glucosamine from N-acetyl-alpha-D-glucosamine 1-phosphate: step 1/1. It functions in the pathway bacterial outer membrane biogenesis; LPS lipid A biosynthesis. Catalyzes the last two sequential reactions in the de novo biosynthetic pathway for UDP-N-acetylglucosamine (UDP-GlcNAc). The C-terminal domain catalyzes the transfer of acetyl group from acetyl coenzyme A to glucosamine-1-phosphate (GlcN-1-P) to produce N-acetylglucosamine-1-phosphate (GlcNAc-1-P), which is converted into UDP-GlcNAc by the transfer of uridine 5-monophosphate (from uridine 5-triphosphate), a reaction catalyzed by the N-terminal domain. This chain is Bifunctional protein GlmU, found in Oleidesulfovibrio alaskensis (strain ATCC BAA-1058 / DSM 17464 / G20) (Desulfovibrio alaskensis).